The chain runs to 242 residues: Anthranilate phosphoribosyltransferase (242 aa).

5-phospho-alpha-D-ribose 1-diphosphate contacts are provided by residues Gly79, 82 to 83 (GD), Thr87, 89 to 92 (NVST), 107 to 115 (KHGNRAVSS), and Ser119. Gly79 is a binding site for anthranilate. Ser91 provides a ligand contact to Mg(2+). Asn110 serves as a coordination point for anthranilate. Residue Arg165 coordinates anthranilate. Positions 224 and 225 each coordinate Mg(2+).

This sequence belongs to the anthranilate phosphoribosyltransferase family. Homodimer. It depends on Mg(2+) as a cofactor.

The enzyme catalyses N-(5-phospho-beta-D-ribosyl)anthranilate + diphosphate = 5-phospho-alpha-D-ribose 1-diphosphate + anthranilate. It functions in the pathway amino-acid biosynthesis; L-tryptophan biosynthesis; L-tryptophan from chorismate: step 2/5. Its function is as follows. Catalyzes the transfer of the phosphoribosyl group of 5-phosphorylribose-1-pyrophosphate (PRPP) to anthranilate to yield N-(5'-phosphoribosyl)-anthranilate (PRA). The chain is Anthranilate phosphoribosyltransferase (trpD) from Bacillus caldotenax.